The chain runs to 298 residues: Mimecan (298 aa).

A signal peptide spans 1–19; it reads METVHSTFLLLLFVPLTQQ. Asparagine 88 is a glycosylation site (N-linked (GlcNAc...) (keratan sulfate) asparagine). 7 LRR repeats span residues 112–131, 132–155, 156–179, 180–199, 200–225, 226–246, and 247–277; these read DAVP…FNKI, KKLT…GNLI, EDIE…ENQL, LRLP…HNKI, KSKG…HNDL, ESVP…FNSI, and SSLT…GNPI. A disulfide bond links cysteine 255 and cysteine 288. Residue asparagine 258 is glycosylated (N-linked (GlcNAc...) (keratan sulfate) asparagine).

This sequence belongs to the small leucine-rich proteoglycan (SLRP) family. SLRP class III subfamily. Contains keratan sulfate.

The protein localises to the secreted. Its subcellular location is the extracellular space. It is found in the extracellular matrix. Its function is as follows. Induces bone formation in conjunction with TGF-beta-1 or TGF-beta-2. This chain is Mimecan (Ogn), found in Mus musculus (Mouse).